The sequence spans 431 residues: Synaptotagmin-11 (431 aa).

Residues 1-15 (MAEITNIRPSFDVSP) are Vesicular-facing. Residues 16-36 (VVAGLIGASVLVVCVSVTVFV) traverse the membrane as a helical segment. Residues 37–431 (WSCCHQQAEK…VAKWHSLSEY (395 aa)) are Cytoplasmic-facing. S134 bears the Phosphoserine mark. A disordered region spans residues 134-154 (SPITSLTPGESKTTSPSSPEE). A compositionally biased stretch (low complexity) spans 140 to 151 (TPGESKTTSPSS). C2 domains are found at residues 157–279 (MLGS…QLTR) and 291–426 (SRGE…AKWH). 3 residues coordinate Ca(2+): D250, S253, and D256.

The protein belongs to the synaptotagmin family. Homodimer. Can also form heterodimers. Interacts with PRKN. Interacts (via C2 2 domain) with AGO2 and SND1; the interaction with SND1 is direct. Interacts with KIF1A; the interaction increases in presence of calcium. Ca(2+) serves as cofactor. Ubiquitinated, at least by PRKN, and targeted to the proteasome complex for degradation. Ubiquitination is inhibited by ATP13A2.

It localises to the cytoplasmic vesicle membrane. Its subcellular location is the perikaryon. The protein resides in the golgi apparatus. The protein localises to the trans-Golgi network membrane. It is found in the recycling endosome membrane. It localises to the lysosome membrane. Its subcellular location is the cytoplasmic vesicle. The protein resides in the phagosome. The protein localises to the cell projection. It is found in the axon. It localises to the dendrite. Its subcellular location is the postsynaptic density. The protein resides in the clathrin-coated vesicle membrane. Synaptotagmin family member involved in vesicular and membrane trafficking which does not bind Ca(2+). Inhibits clathrin-mediated and bulk endocytosis, functions to ensure precision in vesicle retrieval. Plays an important role in dopamine transmission by regulating endocytosis and the vesicle-recycling process. Essential component of a neuronal vesicular trafficking pathway that differs from the synaptic vesicle trafficking pathway but is crucial for development and synaptic plasticity. In macrophages and microglia, inhibits the conventional cytokine secretion, of at least IL6 and TNF, and phagocytosis. In astrocytes, regulates lysosome exocytosis, mechanism required for the repair of injured astrocyte cell membrane. Required for the ATP13A2-mediated regulation of the autophagy-lysosome pathway. This is Synaptotagmin-11 from Homo sapiens (Human).